Consider the following 254-residue polypeptide: Thiazole synthase (254 aa).

The Schiff-base intermediate with DXP role is filled by K95. 1-deoxy-D-xylulose 5-phosphate contacts are provided by residues G156, 182–183 (AG), and 204–205 (NT).

The protein belongs to the ThiG family. In terms of assembly, homotetramer. Forms heterodimers with either ThiH or ThiS.

Its subcellular location is the cytoplasm. It carries out the reaction [ThiS sulfur-carrier protein]-C-terminal-Gly-aminoethanethioate + 2-iminoacetate + 1-deoxy-D-xylulose 5-phosphate = [ThiS sulfur-carrier protein]-C-terminal Gly-Gly + 2-[(2R,5Z)-2-carboxy-4-methylthiazol-5(2H)-ylidene]ethyl phosphate + 2 H2O + H(+). It functions in the pathway cofactor biosynthesis; thiamine diphosphate biosynthesis. Functionally, catalyzes the rearrangement of 1-deoxy-D-xylulose 5-phosphate (DXP) to produce the thiazole phosphate moiety of thiamine. Sulfur is provided by the thiocarboxylate moiety of the carrier protein ThiS. In vitro, sulfur can be provided by H(2)S. The sequence is that of Thiazole synthase from Shewanella putrefaciens (strain CN-32 / ATCC BAA-453).